The primary structure comprises 59 residues: Antitoxin RelB4 (59 aa).

Residues 38–59 (VGEWLKTLGTPHQTPPPYSWRK) are disordered. The span at 50 to 59 (QTPPPYSWRK) shows a compositional bias: pro residues.

Its function is as follows. Antitoxin component of a type II toxin-antitoxin (TA) system. Neutralizes the effect of cognate toxin RelE4, but no other RelE or ParE toxin. In Caulobacter vibrioides (strain ATCC 19089 / CIP 103742 / CB 15) (Caulobacter crescentus), this protein is Antitoxin RelB4 (relB4).